A 346-amino-acid polypeptide reads, in one-letter code: MSLLKDSTVAVITGTSSNLGFNIAVRLLEGLPDNKEITLVVTSRTLPKVKEVISDIKKYIVEKIPTKVNKVEFDYLLVDFTDMVSILSAYYELNKRYKHIDYLFINAAQGVYGGIDWTGAVLEVLQSPIEAVTNPTYKLQKVGVESGDKLGLVFQANVFGPYYFIHRIKHLLKNGGKIVWISSLMSSPKYLSFNDLQLLRSPASYEGSKRLVDLMHFGTYNKLEREYGIKQYLVHPGIFTSFSFFQYLNVFTYYGMLFLFYLARFLGSPYHNISGYIAANAPVAAALGQTKQNCKTASACTRSGKEYLLEEEIDSTGSDDVVSYLDTLTKEWDEKLKDQIVNTRQP.

3 residues coordinate NADP(+): Leu-19, Thr-42, and Lys-48. Catalysis depends on proton donor residues Ser-182 and Tyr-205. NADP(+) is bound by residues Tyr-205, Lys-209, and Ser-241. The active-site Lowers pKa of active site Tyr is the Lys-209. Residues 242–262 form a helical membrane-spanning segment; it reads FSFFQYLNVFTYYGMLFLFYL. An N-linked (GlcNAc...) asparagine glycan is attached at Asn-272.

Belongs to the short-chain dehydrogenases/reductases (SDR) family. ERG27 subfamily. In terms of assembly, heterotetramer of ERG25, ERG26, ERG27 and ERG28. ERG28 acts as a scaffold to tether ERG27 and other 4,4-demethylation-related enzymes, forming a demethylation enzyme complex, in the endoplasmic reticulum. Interacts with ERG25 and ERG28. Also interacts with ERG7, but only in lipid particles.

The protein localises to the endoplasmic reticulum membrane. It is found in the lipid droplet. The catalysed reaction is 3-dehydro-4alpha-methylzymosterol + NADPH + H(+) = 4alpha-methylzymosterol + NADP(+). The protein operates within steroid biosynthesis; zymosterol biosynthesis; zymosterol from lanosterol: step 5/6. 3-keto-steroid reductase; part of the third module of ergosterol biosynthesis pathway that includes the late steps of the pathway. ERG27 is a catalytic component of the C-4 demethylation complex that catalyzes the reduction of the keto group on the C-3. The third module or late pathway involves the ergosterol synthesis itself through consecutive reactions that mainly occur in the endoplasmic reticulum (ER) membrane. Firstly, the squalene synthase ERG9 catalyzes the condensation of 2 farnesyl pyrophosphate moieties to form squalene, which is the precursor of all steroids. Squalene synthase is crucial for balancing the incorporation of farnesyl diphosphate (FPP) into sterol and nonsterol isoprene synthesis. Secondly, the squalene epoxidase ERG1 catalyzes the stereospecific oxidation of squalene to (S)-2,3-epoxysqualene, which is considered to be a rate-limiting enzyme in steroid biosynthesis. Then, the lanosterol synthase ERG7 catalyzes the cyclization of (S)-2,3 oxidosqualene to lanosterol, a reaction that forms the sterol core. In the next steps, lanosterol is transformed to zymosterol through a complex process involving various demethylation, reduction and desaturation reactions. The lanosterol 14-alpha-demethylase ERG11 (also known as CYP51) catalyzes C14-demethylation of lanosterol to produce 4,4'-dimethyl cholesta-8,14,24-triene-3-beta-ol, which is critical for ergosterol biosynthesis. The C-14 reductase ERG24 reduces the C14=C15 double bond of 4,4-dimethyl-cholesta-8,14,24-trienol to produce 4,4-dimethyl-cholesta-8,24-dienol. 4,4-dimethyl-cholesta-8,24-dienol is substrate of the C-4 demethylation complex ERG25-ERG26-ERG27 in which ERG25 catalyzes the three-step monooxygenation required for the demethylation of 4,4-dimethyl and 4alpha-methylsterols, ERG26 catalyzes the oxidative decarboxylation that results in a reduction of the 3-beta-hydroxy group at the C-3 carbon to an oxo group, and ERG27 is responsible for the reduction of the keto group on the C-3. ERG28 has a role as a scaffold to help anchor ERG25, ERG26 and ERG27 to the endoplasmic reticulum and ERG29 regulates the activity of the iron-containing C4-methylsterol oxidase ERG25. Then, the sterol 24-C-methyltransferase ERG6 catalyzes the methyl transfer from S-adenosyl-methionine to the C-24 of zymosterol to form fecosterol. The C-8 sterol isomerase ERG2 catalyzes the reaction which results in unsaturation at C-7 in the B ring of sterols and thus converts fecosterol to episterol. The sterol-C5-desaturase ERG3 then catalyzes the introduction of a C-5 double bond in the B ring to produce 5-dehydroepisterol. The C-22 sterol desaturase ERG5 further converts 5-dehydroepisterol into ergosta-5,7,22,24(28)-tetraen-3beta-ol by forming the C-22(23) double bond in the sterol side chain. Finally, ergosta-5,7,22,24(28)-tetraen-3beta-ol is substrate of the C-24(28) sterol reductase ERG4 to produce ergosterol. Its function is as follows. Facilitates the association of ERG7 with lipid particles preventing its digestion in the endoplasmic reticulum and the lipid particles. In Candida albicans (Yeast), this protein is 3-keto-steroid reductase ERG27.